The sequence spans 578 residues: Kelch-like protein 30 (578 aa).

Positions 33–100 constitute a BTB domain; sequence ADVTLLVGGR…VYTGRLTITQ (68 aa). One can recognise a BACK domain in the interval 153 to 255; it reads KAWAFLRENF…EACRAALSQG (103 aa). Kelch repeat units lie at residues 270–326, 327–377, 378–422, 424–471, 473–513, and 514–563; these read VLVV…ALNN, NIYV…ALNG, EIYV…GCRG, LYLV…ALHG, LYLI…PLGD, and ALYV…TVFL.

The protein is Kelch-like protein 30 (KLHL30) of Homo sapiens (Human).